Consider the following 428-residue polypeptide: 4-hydroxy-3-methylbut-2-en-1-yl diphosphate synthase (flavodoxin) (428 aa).

Residues cysteine 300, cysteine 303, cysteine 346, and glutamate 353 each coordinate [4Fe-4S] cluster.

This sequence belongs to the IspG family. Requires [4Fe-4S] cluster as cofactor.

The enzyme catalyses (2E)-4-hydroxy-3-methylbut-2-enyl diphosphate + oxidized [flavodoxin] + H2O + 2 H(+) = 2-C-methyl-D-erythritol 2,4-cyclic diphosphate + reduced [flavodoxin]. It functions in the pathway isoprenoid biosynthesis; isopentenyl diphosphate biosynthesis via DXP pathway; isopentenyl diphosphate from 1-deoxy-D-xylulose 5-phosphate: step 5/6. Functionally, converts 2C-methyl-D-erythritol 2,4-cyclodiphosphate (ME-2,4cPP) into 1-hydroxy-2-methyl-2-(E)-butenyl 4-diphosphate. The polypeptide is 4-hydroxy-3-methylbut-2-en-1-yl diphosphate synthase (flavodoxin) (Methylobacillus flagellatus (strain ATCC 51484 / DSM 6875 / VKM B-1610 / KT)).